Here is an 882-residue protein sequence, read N- to C-terminus: DNA mismatch repair protein MutS (882 aa).

Residue 656-663 participates in ATP binding; sequence GPNASGKS.

This sequence belongs to the DNA mismatch repair MutS family.

Its function is as follows. This protein is involved in the repair of mismatches in DNA. It is possible that it carries out the mismatch recognition step. This protein has a weak ATPase activity. In Synechococcus sp. (strain ATCC 27144 / PCC 6301 / SAUG 1402/1) (Anacystis nidulans), this protein is DNA mismatch repair protein MutS.